The chain runs to 33 residues: Gaegurin-3 (33 aa).

A disulfide bond links C27 and C33.

This sequence belongs to the frog skin active peptide (FSAP) family. Brevinin subfamily. In terms of assembly, monomer. As to expression, expressed by the skin glands.

It localises to the secreted. Its function is as follows. Has a non-hemolytic activity. Has a broad spectrum of activity against both Gram-positive and Gram-negative bacteria, fungi and protozoa. The protein is Gaegurin-3 (GGN3) of Glandirana rugosa (Japanese wrinkled frog).